Reading from the N-terminus, the 805-residue chain is Transmembrane channel-like protein 6 (805 aa).

Residues 1 to 29 (MAQPLAFILDVPETPGDQGQGPSPYDESE) form a disordered region. The Lumenal portion of the chain corresponds to 1-209 (MAQPLAFILD…SCCGRLRYAC (209 aa)). The residue at position 89 (T89) is a Phosphothreonine. R94 bears the Omega-N-methylarginine mark. N103 carries N-linked (GlcNAc...) asparagine glycosylation. The residue at position 105 (T105) is a Phosphothreonine. A helical transmembrane segment spans residues 210–230 (VLALHSLGLALLSALQALMPW). The Cytoplasmic segment spans residues 231-249 (RYALKRIGGQFGSSVLSYF). The helical transmembrane segment at 250 to 270 (LFLKTLLAFNALLLLLLVAFI) threads the bilayer. The Lumenal segment spans residues 271–338 (MGPQVAFPPA…TPRVGGLPYN (68 aa)). Residue N312 is glycosylated (N-linked (GlcNAc...) asparagine). A helical transmembrane segment spans residues 339 to 359 (MPLAYLSTVGVSFFITCITLV). Topologically, residues 360-431 (YSMAHSFGES…RSVCGRLRQA (72 aa)) are cytoplasmic. Residues 432–452 (AVLGLVWLLCLGTALGCAVAV) traverse the membrane as a helical segment. Topologically, residues 453–469 (HVFSEFMIQSPEAAGQE) are lumenal. A helical transmembrane segment spans residues 470 to 490 (AVLLVLPLVVGLLNLGAPYLC). The Cytoplasmic segment spans residues 491–505 (RVLAALEPHDSPVLE). A helical membrane pass occupies residues 506–526 (VYVAICRNLILKLAILGTLCY). At 527 to 553 (HWLGRRVGVLQGQCWEDFVGQELYRFL) the chain is on the lumenal side. Residues 554–574 (VMDFVLMLLDTLFGELVWRII) traverse the membrane as a helical segment. Residues 575–604 (SEKKLKRRRKPEFDIARNVLELIYGQTLTW) lie on the Cytoplasmic side of the membrane. Residues 605–625 (LGVLFSPLLPAVQIIKLLLVF) form a helical membrane-spanning segment. Over 626-650 (YVKKTSLLANCQAPRRPWLASHMST) the chain is Lumenal. A helical transmembrane segment spans residues 651–671 (VFLTLLCFPAFLGAAVFLCYA). The Cytoplasmic segment spans residues 672-722 (VWQVKPSSTCGPFRTLDTMYEAGRVWVRHLEAAGPRVSWLPWVHRYLMENT). Residues 723 to 743 (FFVFLVSALLLAVIYLNIQVV) traverse the membrane as a helical segment. Residues 744–805 (RGQRKVICLL…PALLTDEQDA (62 aa)) are Lumenal-facing. The tract at residues 778–805 (KEREERSRVGTTEEAAAPPALLTDEQDA) is disordered.

The protein belongs to the TMC family. In terms of assembly, interacts with TMC8. Interacts and forms a complex with TMC8 and CIB1; the interaction stabilizes each component of the complex. Interacts and forms a complex with TMC8 and SLC30A1/ZNT1; the interaction regulates zinc transport into the ER. As to quaternary structure, (Microbial infection) Interacts with human papillomavirus 16/HPV16 protein E5; the interaction alleviates TMC6-mediated transcription factors inhibition. As to expression, expressed in placenta, prostate, testis, activated T-lymphocytes and lymphokine-activated killer (LAK) lymphocytes.

Its subcellular location is the endoplasmic reticulum membrane. It is found in the golgi apparatus membrane. It localises to the nucleus membrane. Acts as a regulatory protein involved in the regulation of numerous cellular processes. Together with its homolog TMC8/EVER2, forms a complex with CIB1 in lymphocytes and keratynocytes where TMC6 and TMC8 stabilize CIB1 and reciprocally. Together with TMC8, also forms a complex with and activates zinc transporter ZNT1 at the ER membrane of keratynocytes, thereby facilitating zinc uptake into the ER. Down-regulates the activity of transcription factors induced by zinc and cytokines. Also plays a role in thermal sensation by inhibiting the M-channel (KCNQ2-KCNQ3 channel) current in primary sensory neurons. In Homo sapiens (Human), this protein is Transmembrane channel-like protein 6.